The following is a 334-amino-acid chain: Hemin transport system permease protein HmuU (334 aa).

A run of 9 helical transmembrane segments spans residues L9–G29, L60–F80, A96–L116, Y117–L137, L149–I169, W191–Q211, A244–V264, W278–A298, and E306–L326.

It belongs to the binding-protein-dependent transport system permease family. FecCD subfamily.

It localises to the cell inner membrane. Its function is as follows. Part of the binding-protein-dependent transport system for hemin; probably responsible for the translocation of the substrate across the membrane. This is Hemin transport system permease protein HmuU (hmuU) from Yersinia pestis.